A 121-amino-acid polypeptide reads, in one-letter code: Small ribosomal subunit protein bS6 (121 aa).

A disordered region spans residues 99–121 (PSLMMRNVEREEARKTQQQEFAA). Basic and acidic residues predominate over residues 105–115 (NVEREEARKTQ).

Belongs to the bacterial ribosomal protein bS6 family.

Functionally, binds together with bS18 to 16S ribosomal RNA. The sequence is that of Small ribosomal subunit protein bS6 from Polaromonas naphthalenivorans (strain CJ2).